The primary structure comprises 360 residues: (+)-6a-hydroxymaackiain 3-O-methyltransferase 1 (360 aa).

S-adenosyl-L-methionine contacts are provided by residues 202–205 (VAGG), Asp226, 226–227 (DQ), 246–247 (DM), and Lys260. His264 (proton acceptor) is an active-site residue.

The protein belongs to the class I-like SAM-binding methyltransferase superfamily. Cation-independent O-methyltransferase family. COMT subfamily.

The enzyme catalyses (+)-6a-hydroxymaackiain + S-adenosyl-L-methionine = (+)-pisatin + S-adenosyl-L-homocysteine + H(+). The catalysed reaction is a 4'-hydroxyisoflavone + S-adenosyl-L-methionine = a 4'-methoxyisoflavone + S-adenosyl-L-homocysteine + H(+). Its function is as follows. Methyltransferase involved in the phytoalexin pisatin biosynthesis. Has both 3- and 4'-O-methyltransferase activities. Can use (+)-6a-hydroxymaackiain, 2,7,4'-trihydroxyisoflavanone and with much less activity (+)-medicarpin as substrates, but not (-)-6a-hydroxymaackiain, daidzein, formononetin or isoliquiritigenin. May be involved in formononetin biosynthesis. The chain is (+)-6a-hydroxymaackiain 3-O-methyltransferase 1 (HMM1) from Pisum sativum (Garden pea).